Here is a 517-residue protein sequence, read N- to C-terminus: Glucose-6-phosphate isomerase (517 aa).

The active-site Proton donor is Glu-345. Catalysis depends on residues His-376 and Lys-490.

This sequence belongs to the GPI family.

Its subcellular location is the cytoplasm. The catalysed reaction is alpha-D-glucose 6-phosphate = beta-D-fructose 6-phosphate. It functions in the pathway carbohydrate biosynthesis; gluconeogenesis. The protein operates within carbohydrate degradation; glycolysis; D-glyceraldehyde 3-phosphate and glycerone phosphate from D-glucose: step 2/4. In terms of biological role, catalyzes the reversible isomerization of glucose-6-phosphate to fructose-6-phosphate. This Erythrobacter litoralis (strain HTCC2594) protein is Glucose-6-phosphate isomerase.